Reading from the N-terminus, the 495-residue chain is Sulfhydryl oxidase 2 (495 aa).

The first 15 residues, 1–15 (MSLVHLLLFAGLVIA), serve as a signal peptide directing secretion. The Thioredoxin domain maps to 29 to 164 (EISDQKDKAV…LLNWINKQIG (136 aa)). Asparagine 41 is a glycosylation site (N-linked (GlcNAc...) asparagine). Active-site nucleophile residues include cysteine 66 and cysteine 69. The cysteines at positions 66 and 69 are disulfide-linked. Asparagine 182, asparagine 257, asparagine 266, and asparagine 292 each carry an N-linked (GlcNAc...) asparagine glycan. A disulfide bond links cysteine 287 and cysteine 299. The ERV/ALR sulfhydryl oxidase domain occupies 290-392 (SKNDTRGFSC…GDPKFPKIIW (103 aa)). FAD-binding positions include arginine 295, tryptophan 302, histidine 306, glutamate 336, histidine 340, 363–370 (WSTHNKVN), lysine 389, and tryptophan 392. Cysteine 334 and cysteine 337 are disulfide-bonded. Cysteine 398 and cysteine 401 form a disulfide bridge.

It depends on FAD as a cofactor.

Its subcellular location is the secreted. It catalyses the reaction 2 R'C(R)SH + O2 = R'C(R)S-S(R)CR' + H2O2. Its function is as follows. Catalyzes the oxidation of sulfhydryl groups in peptide and protein thiols to disulfides with the reduction of oxygen to hydrogen peroxide. May contribute to disulfide bond formation in a variety of secreted proteins. The sequence is that of Sulfhydryl oxidase 2 (QSOX2) from Arabidopsis thaliana (Mouse-ear cress).